We begin with the raw amino-acid sequence, 347 residues long: Holliday junction branch migration complex subunit RuvB (347 aa).

Residues 1–183 form a large ATPase domain (RuvB-L) region; it reads MTPPSRIVTP…FGIPIRLNFY (183 aa). ATP-binding positions include Leu22, Arg23, Gly64, Lys67, Thr68, Thr69, 130 to 132, Arg173, Tyr183, and Arg220; that span reads EDF. Mg(2+) is bound at residue Thr68. Residues 184-254 form a small ATPAse domain (RuvB-S) region; sequence TVEELEGIVS…IADHALSALE (71 aa). Positions 257 to 347 are head domain (RuvB-H); the sequence is AAGLDAMDRR…QFGLFGGDEE (91 aa). The DNA site is built by Arg293, Arg312, and Arg317.

It belongs to the RuvB family. Homohexamer. Forms an RuvA(8)-RuvB(12)-Holliday junction (HJ) complex. HJ DNA is sandwiched between 2 RuvA tetramers; dsDNA enters through RuvA and exits via RuvB. An RuvB hexamer assembles on each DNA strand where it exits the tetramer. Each RuvB hexamer is contacted by two RuvA subunits (via domain III) on 2 adjacent RuvB subunits; this complex drives branch migration. In the full resolvosome a probable DNA-RuvA(4)-RuvB(12)-RuvC(2) complex forms which resolves the HJ.

It is found in the cytoplasm. It carries out the reaction ATP + H2O = ADP + phosphate + H(+). The RuvA-RuvB-RuvC complex processes Holliday junction (HJ) DNA during genetic recombination and DNA repair, while the RuvA-RuvB complex plays an important role in the rescue of blocked DNA replication forks via replication fork reversal (RFR). RuvA specifically binds to HJ cruciform DNA, conferring on it an open structure. The RuvB hexamer acts as an ATP-dependent pump, pulling dsDNA into and through the RuvAB complex. RuvB forms 2 homohexamers on either side of HJ DNA bound by 1 or 2 RuvA tetramers; 4 subunits per hexamer contact DNA at a time. Coordinated motions by a converter formed by DNA-disengaged RuvB subunits stimulates ATP hydrolysis and nucleotide exchange. Immobilization of the converter enables RuvB to convert the ATP-contained energy into a lever motion, pulling 2 nucleotides of DNA out of the RuvA tetramer per ATP hydrolyzed, thus driving DNA branch migration. The RuvB motors rotate together with the DNA substrate, which together with the progressing nucleotide cycle form the mechanistic basis for DNA recombination by continuous HJ branch migration. Branch migration allows RuvC to scan DNA until it finds its consensus sequence, where it cleaves and resolves cruciform DNA. The sequence is that of Holliday junction branch migration complex subunit RuvB from Rhodopseudomonas palustris (strain BisA53).